We begin with the raw amino-acid sequence, 85 residues long: Large ribosomal subunit protein bL27 (85 aa).

The disordered stretch occupies residues 1 to 22; sequence MAHKKAGGSTNNGRDSESKRLG.

The protein belongs to the bacterial ribosomal protein bL27 family.

The sequence is that of Large ribosomal subunit protein bL27 from Photobacterium profundum (strain SS9).